We begin with the raw amino-acid sequence, 164 residues long: NADH-quinone oxidoreductase subunit J (164 aa).

5 helical membrane passes run 1-21 (MEFF…CSIF), 30-50 (LYLI…GATF), 54-74 (LEVI…IMMF), 94-114 (YINF…ILSY), and 138-158 (YILV…IVSH).

Belongs to the complex I subunit 6 family. As to quaternary structure, composed of 13 different subunits. Subunits NuoA, H, J, K, L, M, N constitute the membrane sector of the complex.

It is found in the cell membrane. The enzyme catalyses a quinone + NADH + 5 H(+)(in) = a quinol + NAD(+) + 4 H(+)(out). Its function is as follows. NDH-1 shuttles electrons from NADH, via FMN and iron-sulfur (Fe-S) centers, to quinones in the respiratory chain. Couples the redox reaction to proton translocation (for every two electrons transferred, four hydrogen ions are translocated across the cytoplasmic membrane), and thus conserves the redox energy in a proton gradient. The sequence is that of NADH-quinone oxidoreductase subunit J (nuoJ) from Buchnera aphidicola subsp. Baizongia pistaciae (strain Bp).